The chain runs to 483 residues: Glutamyl-tRNA(Gln) amidotransferase subunit A (483 aa).

Residues Lys75 and Ser150 each act as charge relay system in the active site. Catalysis depends on Ser174, which acts as the Acyl-ester intermediate.

Belongs to the amidase family. GatA subfamily. In terms of assembly, heterotrimer of A, B and C subunits.

It catalyses the reaction L-glutamyl-tRNA(Gln) + L-glutamine + ATP + H2O = L-glutaminyl-tRNA(Gln) + L-glutamate + ADP + phosphate + H(+). Allows the formation of correctly charged Gln-tRNA(Gln) through the transamidation of misacylated Glu-tRNA(Gln) in organisms which lack glutaminyl-tRNA synthetase. The reaction takes place in the presence of glutamine and ATP through an activated gamma-phospho-Glu-tRNA(Gln). In Legionella pneumophila subsp. pneumophila (strain Philadelphia 1 / ATCC 33152 / DSM 7513), this protein is Glutamyl-tRNA(Gln) amidotransferase subunit A.